Reading from the N-terminus, the 484-residue chain is MSGGLFIDGVWRAGAGAQATSVDPTTGEVIWRQATASTAEVAAAVEAARKAFPAWADRSREERIAVLRRYKDVLVARTGTFAEALSRETGKALWETKAELGSMAGKVEASIKAYDERTGEHANDMAFGRAVLRHRAHGVMAVLGPFNFPGHLPNGHIVPALLAGDTVVFKPSEETPLAGQLLVEALEEAGVPAGVINLVQGGREVGQALIDQEIDGLLFTGSAAAGAFFRRHFADRPDVILALELGGNNPLVVWDAGDPEAVAALIVQSAFITTGQRCSCARRLIVSDDAAGRAVIDAVAALSERLVIGPWNGGQEPFMGPLISDRAAAMALAGAKAMPGQTLRAMTSVDGLSRAFVSPGLVDVTGETVPDEELFAPLLQVRRVGSFEEAIAAANATRYGLSAGLVSNETAHWDRFLTRIRAGVVNWNRPTTGAAGTMPFGGLGNSGNHRPSAYYAADYCAYPVASFEAENVTNTLGDIKGLRA.

221 to 226 (GSAAAG) serves as a coordination point for NAD(+). Active-site residues include Glu-244 and Cys-278.

The protein belongs to the aldehyde dehydrogenase family. AstD subfamily.

It carries out the reaction N-succinyl-L-glutamate 5-semialdehyde + NAD(+) + H2O = N-succinyl-L-glutamate + NADH + 2 H(+). It functions in the pathway amino-acid degradation; L-arginine degradation via AST pathway; L-glutamate and succinate from L-arginine: step 4/5. Catalyzes the NAD-dependent reduction of succinylglutamate semialdehyde into succinylglutamate. This is N-succinylglutamate 5-semialdehyde dehydrogenase from Caulobacter sp. (strain K31).